The following is a 125-amino-acid chain: Histone H2A (125 aa).

Residues 1–18 show a composition bias toward basic residues; it reads MSGRGKGGKAKAKAKSRS. Residues 1-21 are disordered; the sequence is MSGRGKGGKAKAKAKSRSSRA. At Ser-2 the chain carries N-acetylserine. Residue Gln-104 is modified to N5-methylglutamine.

Belongs to the histone H2A family. As to quaternary structure, the nucleosome is a histone octamer containing two molecules each of H2A, H2B, H3 and H4 assembled in one H3-H4 heterotetramer and two H2A-H2B heterodimers. The octamer wraps approximately 147 bp of DNA.

It is found in the nucleus. The protein localises to the chromosome. In terms of biological role, core component of nucleosome. Nucleosomes wrap and compact DNA into chromatin, limiting DNA accessibility to the cellular machineries which require DNA as a template. Histones thereby play a central role in transcription regulation, DNA repair, DNA replication and chromosomal stability. DNA accessibility is regulated via a complex set of post-translational modifications of histones, also called histone code, and nucleosome remodeling. This Mytilus trossulus (Blue mussel) protein is Histone H2A.